The sequence spans 332 residues: Phosphate acyltransferase (332 aa).

The protein belongs to the PlsX family. Homodimer. Probably interacts with PlsY.

It is found in the cytoplasm. It catalyses the reaction a fatty acyl-[ACP] + phosphate = an acyl phosphate + holo-[ACP]. It functions in the pathway lipid metabolism; phospholipid metabolism. Functionally, catalyzes the reversible formation of acyl-phosphate (acyl-PO(4)) from acyl-[acyl-carrier-protein] (acyl-ACP). This enzyme utilizes acyl-ACP as fatty acyl donor, but not acyl-CoA. This Sulfurimonas denitrificans (strain ATCC 33889 / DSM 1251) (Thiomicrospira denitrificans (strain ATCC 33889 / DSM 1251)) protein is Phosphate acyltransferase.